A 410-amino-acid chain; its full sequence is Shaggy-related protein kinase epsilon (410 aa).

Ala-2 is modified (N-acetylalanine). The Protein kinase domain occupies 74 to 358; that stretch reads YMAERIVGQG…AMEAIVHPFF (285 aa). Residues 80–88 and Lys-103 each bind ATP; that span reads VGQGSFGIV. Asp-199 serves as the catalytic Proton acceptor. Tyr-234 carries the post-translational modification Phosphotyrosine.

The protein belongs to the protein kinase superfamily. CMGC Ser/Thr protein kinase family. GSK-3 subfamily. In terms of assembly, binds to KIB1. Autophosphorylated mainly on threonine and serine residues.

It catalyses the reaction L-seryl-[protein] + ATP = O-phospho-L-seryl-[protein] + ADP + H(+). The enzyme catalyses L-threonyl-[protein] + ATP = O-phospho-L-threonyl-[protein] + ADP + H(+). Functionally, may mediate extracellular signals to regulate transcription in differentiating cells. In Arabidopsis thaliana (Mouse-ear cress), this protein is Shaggy-related protein kinase epsilon (ASK5).